A 1003-amino-acid chain; its full sequence is Rho-associated protein kinase 1 (1003 aa).

Residues 1–28 are disordered; it reads VAPVVPDLSSDIDTSNFDDLEEDKGEEE. An AGC-kinase C-terminal domain is found at 1–58; sequence VAPVVPDLSSDIDTSNFDDLEEDKGEEETFPIPKAFVGNQLPFVGFTYYSNRRYLSSA. The span at 16 to 28 shows a compositional bias: acidic residues; sequence NFDDLEEDKGEEE. Residues 17–376 are interaction with FHOD1; sequence FDDLEEDKGE…KKLKEEREAR (360 aa). The stretch at 71 to 341 forms a coiled coil; that stretch reads KSLQESLQKT…RLEQEVNEHK (271 aa). In terms of domain architecture, REM-1 spans 128-205; that stretch reads STVSQIEKEK…LEEANDLLRT (78 aa). N6-acetyllysine is present on K296. Residues 356–595 are SHROOM3 binding; it reads EAKSVAMCEM…TVSRLEEANS (240 aa). The RhoBD domain occupies 598–664; the sequence is TKDIEILRRE…LAEIMNRKDF (67 aa). The tract at residues 647 to 659 is RHOA binding; the sequence is LKTQAVNKLAEIM. Positions 660–751 form a coiled coil; that stretch reads NRKDFKIDRK…KLLDLSDSTS (92 aa). 2 positions are modified to phosphoserine: S754 and S757. The tract at residues 764-1003 is auto-inhibitory; it reads NLPESRIEGW…VVKNTSGKTR (240 aa). Residues 767 to 966 form the PH domain; the sequence is ESRIEGWLSV…WVTHLVKKIP (200 aa). A Phorbol-ester/DAG-type zinc finger spans residues 877 to 930; the sequence is GHEFIPTLYHFPANCDACAKPLWHVFKPPPALECRRCHVKCHRDHLDKKEDLIC. A disordered region spans residues 968 to 1003; that stretch reads NPPSGFVRASPRTLSTRSTANQSFRKVVKNTSGKTR. S977 bears the Phosphoserine mark. The span at 979–1003 shows a compositional bias: polar residues; that stretch reads RTLSTRSTANQSFRKVVKNTSGKTR.

It belongs to the protein kinase superfamily. AGC Ser/Thr protein kinase family. Homodimer. Interacts with RHOA (activated by GTP), RHOB, RHOC, GEM, MYLC2B, RHOE, PPP1R12A, LIMK1, LIMK2, TSG101, CHORDC1, DAPK3, PFN1, PTEN and JIP3. Interacts with ITGB1BP1 (via N-terminus and PTB domain). Interacts with FHOD1 in a Src-dependent manner. Interacts with SHROOM3. The cofactor is Mg(2+). In terms of processing, autophosphorylated on serine and threonine residues. Cleaved by caspase-3 during apoptosis. This leads to constitutive activation of the kinase and membrane blebbing.

The protein resides in the cytoplasm. Its subcellular location is the cytoskeleton. It is found in the microtubule organizing center. The protein localises to the centrosome. It localises to the centriole. The protein resides in the golgi apparatus membrane. Its subcellular location is the cell projection. It is found in the bleb. The protein localises to the cell membrane. It localises to the lamellipodium. The protein resides in the ruffle. The enzyme catalyses L-seryl-[protein] + ATP = O-phospho-L-seryl-[protein] + ADP + H(+). The catalysed reaction is L-threonyl-[protein] + ATP = O-phospho-L-threonyl-[protein] + ADP + H(+). Its activity is regulated as follows. Activated by RHOA binding. Inhibited by Y-27632. In terms of biological role, protein kinase which is a key regulator of actin cytoskeleton and cell polarity. Involved in regulation of smooth muscle contraction, actin cytoskeleton organization, stress fiber and focal adhesion formation, neurite retraction, cell adhesion and motility via phosphorylation of DAPK3, GFAP, LIMK1, LIMK2, MYL9/MLC2, TPPP, PFN1 and PPP1R12A. Phosphorylates FHOD1 and acts synergistically with it to promote SRC-dependent non-apoptotic plasma membrane blebbing. Phosphorylates JIP3 and regulates the recruitment of JNK to JIP3 upon UVB-induced stress. Acts as a suppressor of inflammatory cell migration by regulating PTEN phosphorylation and stability. Acts as a negative regulator of VEGF-induced angiogenic endothelial cell activation. Required for centrosome positioning and centrosome-dependent exit from mitosis. Plays a role in terminal erythroid differentiation. May regulate closure of the eyelids and ventral body wall by inducing the assembly of actomyosin bundles. Promotes keratinocyte terminal differentiation. Involved in osteoblast compaction through the fibronectin fibrillogenesis cell-mediated matrix assembly process, essential for osteoblast mineralization. The chain is Rho-associated protein kinase 1 (ROCK1) from Pan troglodytes (Chimpanzee).